We begin with the raw amino-acid sequence, 639 residues long: Cystathionine gamma-synthase (639 aa).

K443 is subject to N6-(pyridoxal phosphate)lysine.

This sequence belongs to the trans-sulfuration enzymes family. MET7 subfamily. Requires pyridoxal 5'-phosphate as cofactor.

It localises to the cytoplasm. It is found in the nucleus. It catalyses the reaction O-succinyl-L-homoserine + L-cysteine = L,L-cystathionine + succinate + H(+). It participates in amino-acid biosynthesis; L-methionine biosynthesis via de novo pathway; L-cystathionine from O-succinyl-L-homoserine: step 1/1. Catalyzes the formation of L-cystathionine from O-succinyl-L-homoserine (OSHS) and L-cysteine, via a gamma-replacement reaction. In the absence of thiol, catalyzes gamma-elimination to form 2-oxobutanoate, succinate and ammonia. This Saccharomyces cerevisiae (strain ATCC 204508 / S288c) (Baker's yeast) protein is Cystathionine gamma-synthase.